The primary structure comprises 134 residues: Transcription antitermination protein NusB (134 aa).

It belongs to the NusB family.

Its function is as follows. Involved in transcription antitermination. Required for transcription of ribosomal RNA (rRNA) genes. Binds specifically to the boxA antiterminator sequence of the ribosomal RNA (rrn) operons. This is Transcription antitermination protein NusB from Halothermothrix orenii (strain H 168 / OCM 544 / DSM 9562).